The following is a 779-amino-acid chain: Protocadherin beta-8 (779 aa).

The signal sequence occupies residues 1 to 28; it reads METALTKTPEKRQVIFLAILLLLWEASS. Residues 29–690 lie on the Extracellular side of the membrane; that stretch reads EAISYSMPEE…QEEDMLTLYL (662 aa). Cadherin domains lie at 75 to 133, 134 to 242, 243 to 346, 347 to 450, and 451 to 560; these read LQLD…FPEF, PDTE…APQF, LQSL…APKL, TISS…APAF, and TQTS…APFV. Cys-96 and Cys-102 are disulfide-bonded. Asn-169 is a glycosylation site (N-linked (GlcNAc...) asparagine). Residue Ser-223 is glycosylated (O-linked (Man) serine). O-linked (Man) threonine glycans are attached at residues Thr-225 and Thr-227. Asn-417 carries N-linked (GlcNAc...) asparagine glycosylation. Residue Asn-566 is glycosylated (N-linked (GlcNAc...) asparagine). One can recognise a Cadherin 6 domain in the interval 575–675; that stretch reads LPRAAEPGYL…SQPYLPLPEV (101 aa). Residues 691 to 711 form a helical membrane-spanning segment; sequence VIALASVSSLFLLSVLLFVGV. Topologically, residues 712–779 are cytoplasmic; that stretch reads KLCKKAREAS…IIPSSLLQDS (68 aa).

In terms of assembly, forms homodimers in trans (molecules expressed by two different cells). Forms promiscuous heterodimers in cis (at the plasma membrane of the same cell) with other protocadherins.

It localises to the cell membrane. In terms of biological role, calcium-dependent cell-adhesion protein involved in cells self-recognition and non-self discrimination. Thereby, it is involved in the establishment and maintenance of specific neuronal connections in the brain. The sequence is that of Protocadherin beta-8 from Mus musculus (Mouse).